Consider the following 440-residue polypeptide: GTPase Obg (440 aa).

Residues 5-163 enclose the Obg domain; it reads STFVDQTKIE…RTLRLELKVL (159 aa). Residues 164-338 enclose the OBG-type G domain; sequence ADVGLVGFPS…LMSRAADLVS (175 aa). GTP is bound by residues 170–177, 195–199, 217–220, 288–291, and 319–321; these read GFPSVGKS, FTTLK, DLPG, SQMD, and SSV. Positions 177 and 197 each coordinate Mg(2+). The 79-residue stretch at 362–440 folds into the OCT domain; the sequence is YHRPEKMEFT…IGDFSFEFVQ (79 aa).

This sequence belongs to the TRAFAC class OBG-HflX-like GTPase superfamily. OBG GTPase family. Monomer. The cofactor is Mg(2+).

It localises to the cytoplasm. An essential GTPase which binds GTP, GDP and possibly (p)ppGpp with moderate affinity, with high nucleotide exchange rates and a fairly low GTP hydrolysis rate. Plays a role in control of the cell cycle, stress response, ribosome biogenesis and in those bacteria that undergo differentiation, in morphogenesis control. This Lactobacillus delbrueckii subsp. bulgaricus (strain ATCC 11842 / DSM 20081 / BCRC 10696 / JCM 1002 / NBRC 13953 / NCIMB 11778 / NCTC 12712 / WDCM 00102 / Lb 14) protein is GTPase Obg.